Consider the following 315-residue polypeptide: Glutaminase (315 aa).

Substrate contacts are provided by Ser70, Asn120, Glu166, Asn173, Tyr197, Tyr249, and Val267.

It belongs to the glutaminase family. As to quaternary structure, homotetramer.

The catalysed reaction is L-glutamine + H2O = L-glutamate + NH4(+). The polypeptide is Glutaminase (Sinorhizobium fredii (strain NBRC 101917 / NGR234)).